A 331-amino-acid polypeptide reads, in one-letter code: Protein RecA (331 aa).

67 to 74 is an ATP binding site; sequence GPESSGKT.

The protein belongs to the RecA family.

It is found in the cytoplasm. In terms of biological role, can catalyze the hydrolysis of ATP in the presence of single-stranded DNA, the ATP-dependent uptake of single-stranded DNA by duplex DNA, and the ATP-dependent hybridization of homologous single-stranded DNAs. It interacts with LexA causing its activation and leading to its autocatalytic cleavage. In Wigglesworthia glossinidia brevipalpis, this protein is Protein RecA.